The sequence spans 310 residues: Haloalkane dehalogenase (310 aa).

In terms of domain architecture, AB hydrolase-1 spans 30–140; that stretch reads PVVLFLHGNP…PMPTWQDFHH (111 aa). The active-site Nucleophile is Asp-103. The Proton donor role is filled by Glu-127. Catalysis depends on His-280, which acts as the Proton acceptor.

The protein belongs to the haloalkane dehalogenase family. Type 2 subfamily. As to quaternary structure, monomer.

It catalyses the reaction 1-haloalkane + H2O = a halide anion + a primary alcohol + H(+). Functionally, catalyzes hydrolytic cleavage of carbon-halogen bonds in halogenated aliphatic compounds, leading to the formation of the corresponding primary alcohols, halide ions and protons. In Bradyrhizobium diazoefficiens (strain JCM 10833 / BCRC 13528 / IAM 13628 / NBRC 14792 / USDA 110), this protein is Haloalkane dehalogenase.